A 312-amino-acid chain; its full sequence is Malate dehydrogenase (312 aa).

Residues Gly-7–Gly-13 and Asp-34 each bind NAD(+). The substrate site is built by Arg-81 and Arg-87. NAD(+) contacts are provided by residues Asn-94 and Ile-117 to Asn-119. The substrate site is built by Asn-119 and Arg-153. His-177 (proton acceptor) is an active-site residue. Met-227 provides a ligand contact to NAD(+).

Belongs to the LDH/MDH superfamily. MDH type 1 family. As to quaternary structure, homodimer.

The catalysed reaction is (S)-malate + NAD(+) = oxaloacetate + NADH + H(+). Functionally, catalyzes the reversible oxidation of malate to oxaloacetate. This Escherichia coli (strain ATCC 8739 / DSM 1576 / NBRC 3972 / NCIMB 8545 / WDCM 00012 / Crooks) protein is Malate dehydrogenase.